Here is a 186-residue protein sequence, read N- to C-terminus: Large ribosomal subunit protein uL22 (186 aa).

Residues 160–186 form a disordered region; it reads AAENEPAKKKLSKKKLQRQKEKMMRNE. Basic and acidic residues predominate over residues 177-186; it reads RQKEKMMRNE.

It belongs to the universal ribosomal protein uL22 family.

The polypeptide is Large ribosomal subunit protein uL22 (RpL17) (Aedes aegypti (Yellowfever mosquito)).